The chain runs to 1422 residues: YEATS domain-containing protein 2 (1422 aa).

Lys9 is covalently cross-linked (Glycyl lysine isopeptide (Lys-Gly) (interchain with G-Cter in SUMO2)). The stretch at 47–80 (KEQFALEMKNKEHEIEVIDQRLIEARRMMDKLRA) forms a coiled coil. A Glycyl lysine isopeptide (Lys-Gly) (interchain with G-Cter in SUMO2) cross-link involves residue Lys113. The segment at 117-198 (ESPSRSSSPA…KTEQRNADLT (82 aa)) is disordered. 3 positions are modified to phosphoserine: Ser118, Ser120, and Ser157. Positions 119 to 148 (PSRSSSPANQRAETPSANHSESDSLSQHND) are enriched in polar residues. The segment covering 149 to 165 (FLSDKDNNSNMDIEERL) has biased composition (basic and acidic residues). Over residues 166–176 (SNNMEQRPSRN) the composition is skewed to polar residues. Over residues 177 to 198 (TGRDTSRITGSHKTEQRNADLT) the composition is skewed to basic and acidic residues. A Glycyl lysine isopeptide (Lys-Gly) (interchain with G-Cter in SUMO2) cross-link involves residue Lys189. A YEATS domain is found at 200–345 (ETSRLFVKKT…EDCIYPQSSE (146 aa)). Histone H3K27cr binding regions lie at residues 259 to 261 (HPS) and 282 to 284 (WGE). Lys370 participates in a covalent cross-link: Glycyl lysine isopeptide (Lys-Gly) (interchain with G-Cter in SUMO2). A Phosphothreonine modification is found at Thr407. Phosphoserine is present on residues Ser447, Ser463, Ser465, Ser471, and Ser473. The interval 465–486 (SPISTPSPSPLPRTPTSTPVHV) is disordered. The residue at position 478 (Thr478) is a Phosphothreonine. Lys487 participates in a covalent cross-link: Glycyl lysine isopeptide (Lys-Gly) (interchain with G-Cter in SUMO2). A compositionally biased stretch (polar residues) spans 513–535 (TTPSTGSPTNKISTASQVSQGTG). A disordered region spans residues 513-540 (TTPSTGSPTNKISTASQVSQGTGSPVPK). Ser536 is modified (phosphoserine). Residue Lys552 forms a Glycyl lysine isopeptide (Lys-Gly) (interchain with G-Cter in SUMO2) linkage. A Phosphoserine modification is found at Ser575. A Glycyl lysine isopeptide (Lys-Gly) (interchain with G-Cter in SUMO2) cross-link involves residue Lys592. Phosphoserine is present on Ser627. Glycyl lysine isopeptide (Lys-Gly) (interchain with G-Cter in SUMO2) cross-links involve residues Lys649 and Lys773. The segment at 794–842 (GSAASGGSGAGGGGGGGGGGGSGSGGGGSTGGGGGTAGGGTQSTAGPGG) is disordered. Positions 797-842 (ASGGSGAGGGGGGGGGGGSGSGGGGSTGGGGGTAGGGTQSTAGPGG) are enriched in gly residues. A Glycyl lysine isopeptide (Lys-Gly) (interchain with G-Cter in SUMO2) cross-link involves residue Lys923. Lys1110 participates in a covalent cross-link: Glycyl lysine isopeptide (Lys-Gly) (interchain with G-Cter in SUMO1); alternate. A Glycyl lysine isopeptide (Lys-Gly) (interchain with G-Cter in SUMO2); alternate cross-link involves residue Lys1110. Lys1130 participates in a covalent cross-link: Glycyl lysine isopeptide (Lys-Gly) (interchain with G-Cter in SUMO2). Residue Thr1219 is modified to Phosphothreonine. Residues Lys1222 and Lys1285 each participate in a glycyl lysine isopeptide (Lys-Gly) (interchain with G-Cter in SUMO2) cross-link.

As to quaternary structure, component of the ADA2A-containing complex (ATAC), composed of KAT14, KAT2A, TADA2L, TADA3L, ZZ3, MBIP, WDR5, YEATS2, SGF29 and DR1.

It is found in the nucleus. Functionally, chromatin reader component of the ATAC complex, a complex with histone acetyltransferase activity on histones H3 and H4. YEATS2 specifically recognizes and binds histone H3 crotonylated at 'Lys-27' (H3K27cr). Crotonylation marks active promoters and enhancers and confers resistance to transcriptional repressors. This Homo sapiens (Human) protein is YEATS domain-containing protein 2.